The chain runs to 288 residues: ATP synthase gamma chain (288 aa).

This sequence belongs to the ATPase gamma chain family. F-type ATPases have 2 components, CF(1) - the catalytic core - and CF(0) - the membrane proton channel. CF(1) has five subunits: alpha(3), beta(3), gamma(1), delta(1), epsilon(1). CF(0) has three main subunits: a, b and c.

Its subcellular location is the cell inner membrane. Functionally, produces ATP from ADP in the presence of a proton gradient across the membrane. The gamma chain is believed to be important in regulating ATPase activity and the flow of protons through the CF(0) complex. This is ATP synthase gamma chain from Vesicomyosocius okutanii subsp. Calyptogena okutanii (strain HA).